A 94-amino-acid chain; its full sequence is UPF0213 protein BH0048 (94 aa).

In terms of domain architecture, GIY-YIG spans 1 to 76 (MNHYVYILEC…KHLSRRKKEQ (76 aa)).

This sequence belongs to the UPF0213 family.

This is UPF0213 protein BH0048 from Halalkalibacterium halodurans (strain ATCC BAA-125 / DSM 18197 / FERM 7344 / JCM 9153 / C-125) (Bacillus halodurans).